The following is a 238-amino-acid chain: Ribonuclease PH (238 aa).

Phosphate contacts are provided by residues arginine 86 and 124–126; that span reads GTR.

The protein belongs to the RNase PH family. In terms of assembly, homohexameric ring arranged as a trimer of dimers.

It catalyses the reaction tRNA(n+1) + phosphate = tRNA(n) + a ribonucleoside 5'-diphosphate. Its function is as follows. Phosphorolytic 3'-5' exoribonuclease that plays an important role in tRNA 3'-end maturation. Removes nucleotide residues following the 3'-CCA terminus of tRNAs; can also add nucleotides to the ends of RNA molecules by using nucleoside diphosphates as substrates, but this may not be physiologically important. Probably plays a role in initiation of 16S rRNA degradation (leading to ribosome degradation) during starvation. This chain is Ribonuclease PH, found in Actinobacillus pleuropneumoniae serotype 7 (strain AP76).